Reading from the N-terminus, the 427-residue chain is Histidinol dehydrogenase (427 aa).

The NAD(+) site is built by tyrosine 125, glutamine 186, and asparagine 209. Residues serine 234, glutamine 256, and histidine 259 each contribute to the substrate site. Zn(2+)-binding residues include glutamine 256 and histidine 259. Catalysis depends on proton acceptor residues glutamate 325 and histidine 326. 4 residues coordinate substrate: histidine 326, aspartate 359, glutamate 413, and histidine 419. Aspartate 359 provides a ligand contact to Zn(2+). Residue histidine 419 participates in Zn(2+) binding.

Belongs to the histidinol dehydrogenase family. Requires Zn(2+) as cofactor.

The catalysed reaction is L-histidinol + 2 NAD(+) + H2O = L-histidine + 2 NADH + 3 H(+). It functions in the pathway amino-acid biosynthesis; L-histidine biosynthesis; L-histidine from 5-phospho-alpha-D-ribose 1-diphosphate: step 9/9. Catalyzes the sequential NAD-dependent oxidations of L-histidinol to L-histidinaldehyde and then to L-histidine. This is Histidinol dehydrogenase from Leptospira interrogans serogroup Icterohaemorrhagiae serovar copenhageni (strain Fiocruz L1-130).